A 1097-amino-acid chain; its full sequence is Transmembrane protein 132D (1097 aa).

The first 30 residues, 1–30 (MCPSEMGTLWYLWSPVLISLAALFSKVTEG), serve as a signal peptide directing secretion. Residues 31 to 913 (RGILESIQRF…PDQAAKGLSD (883 aa)) are Extracellular-facing. Residues 233 to 245 (DERGDCAKEDSRK) show a composition bias toward basic and acidic residues. Disordered stretches follow at residues 233–263 (DERGDCAKEDSRKSGGAPAGHNDVDESSPPL) and 885–906 (SFPDQVDLPGSNVGTEEHDPDQ). Residues 914–934 (LEIGMYALLGVFCLAILVFLI) form a helical membrane-spanning segment. Residues 935 to 1097 (NCVTFALKYR…SCMERLHEHV (163 aa)) are Cytoplasmic-facing. Residues 1021–1042 (MLTDDKEQKSEPPTSPTSKRKR) form a disordered region.

It belongs to the TMEM132 family. As to expression, expressed in mature oligodendrocytes in the brain.

Its subcellular location is the membrane. Functionally, regulates neuronal morphology via inhibition of the WAVE regulatory complex (WCR), a complex that controls F-actin cytoskeletal dynamics. The protein is Transmembrane protein 132D (Tmem132d) of Rattus norvegicus (Rat).